A 61-amino-acid chain; its full sequence is Chi-conotoxin MrIA (61 aa).

Residues 1 to 19 (MRCLPVLIILLLLTASAPG) form the signal peptide. Positions 20 to 48 (VVVLPKTEDDVPMSSVYGNGKSILRGILR) are excised as a propeptide. Cystine bridges form between Cys-52–Cys-61 and Cys-53–Cys-58. 4-hydroxyproline is present on Pro-60.

This sequence belongs to the conotoxin T superfamily. As to expression, expressed by the venom duct.

The protein resides in the secreted. Its function is as follows. Chi-conotoxins inhibit the neuronal noradrenaline transporter (NET/SLC6A2). Activity has been described on both human (inhibition of norepinephrine uptake is IC(50)=1.26 uM) and rat (pIC(50)=6.21 corresponding IC(50)=0.16 uM) transporters. Acts as a reversible non-competitive inhibitor. The protein is Chi-conotoxin MrIA of Conus marmoreus (Marble cone).